The primary structure comprises 156 residues: Small ribosomal subunit protein uS7 (156 aa).

It belongs to the universal ribosomal protein uS7 family. In terms of assembly, part of the 30S ribosomal subunit. Contacts proteins S9 and S11.

In terms of biological role, one of the primary rRNA binding proteins, it binds directly to 16S rRNA where it nucleates assembly of the head domain of the 30S subunit. Is located at the subunit interface close to the decoding center, probably blocks exit of the E-site tRNA. This is Small ribosomal subunit protein uS7 from Methylococcus capsulatus (strain ATCC 33009 / NCIMB 11132 / Bath).